A 300-amino-acid polypeptide reads, in one-letter code: Geranylgeranyl pyrophosphate synthase (300 aa).

The residue at position 1 (methionine 1) is an N-acetylmethionine. Positions 25, 28, and 57 each coordinate isopentenyl diphosphate. Mg(2+) is bound by residues aspartate 64 and aspartate 68. Arginine 73 is a binding site for dimethylallyl diphosphate. Isopentenyl diphosphate is bound at residue arginine 74. Positions 151, 152, 185, 202, and 212 each coordinate dimethylallyl diphosphate.

Belongs to the FPP/GGPP synthase family. In terms of assembly, homohexamer; trimer of homodimers. It depends on Mg(2+) as a cofactor.

It is found in the cytoplasm. It localises to the perinuclear region. The protein localises to the myofibril. The protein resides in the sarcomere. Its subcellular location is the z line. The catalysed reaction is isopentenyl diphosphate + dimethylallyl diphosphate = (2E)-geranyl diphosphate + diphosphate. The enzyme catalyses isopentenyl diphosphate + (2E)-geranyl diphosphate = (2E,6E)-farnesyl diphosphate + diphosphate. It catalyses the reaction isopentenyl diphosphate + (2E,6E)-farnesyl diphosphate = (2E,6E,10E)-geranylgeranyl diphosphate + diphosphate. Its pathway is isoprenoid biosynthesis; farnesyl diphosphate biosynthesis; farnesyl diphosphate from geranyl diphosphate and isopentenyl diphosphate: step 1/1. It functions in the pathway isoprenoid biosynthesis; geranyl diphosphate biosynthesis; geranyl diphosphate from dimethylallyl diphosphate and isopentenyl diphosphate: step 1/1. It participates in isoprenoid biosynthesis; geranylgeranyl diphosphate biosynthesis; geranylgeranyl diphosphate from farnesyl diphosphate and isopentenyl diphosphate: step 1/1. Functionally, catalyzes the trans-addition of the three molecules of IPP onto DMAPP to form geranylgeranyl pyrophosphate, an important precursor of carotenoids and geranylated proteins. In Rattus norvegicus (Rat), this protein is Geranylgeranyl pyrophosphate synthase (Ggps1).